The sequence spans 202 residues: Cytochrome c oxidase assembly protein CtaG (202 aa).

At 1 to 13 (MSDKAAAPKKQGR) the chain is on the cytoplasmic side. The helical; Signal-anchor for type II membrane protein transmembrane segment at 14 to 36 (NNGAVVLMCLSFVFGMGAMSYAA) threads the bilayer. Residues 37-202 (VPLYRIFCQV…GGAEKVEKKL (166 aa)) are Periplasmic-facing. The interval 183 to 202 (EGPKPLASNEGGAEKVEKKL) is disordered.

Belongs to the COX11/CtaG family.

The protein resides in the cell inner membrane. Its function is as follows. Exerts its effect at some terminal stage of cytochrome c oxidase synthesis, probably by being involved in the insertion of the copper B into subunit I. The protein is Cytochrome c oxidase assembly protein CtaG of Rhizobium etli (strain CIAT 652).